Here is a 700-residue protein sequence, read N- to C-terminus: Kin of IRRE-like protein 2 (700 aa).

An N-terminal signal peptide occupies residues 1-19 (MLASALLVFLCCFKGHAGS). Topologically, residues 20–507 (SPHFLQQPED…GRRDLLPTVR (488 aa)) are extracellular. 5 Ig-like C2-type domains span residues 21–115 (PHFL…AQLH), 120–219 (PEAP…VTLS), 224–304 (PMVT…TALE), 309–391 (PILQ…ARLT), and 395–497 (PPVV…QIHL). A disulfide bridge connects residues Cys-42 and Cys-100. An N-linked (GlcNAc...) asparagine glycan is attached at Asn-140. 2 cysteine pairs are disulfide-bonded: Cys-143–Cys-201 and Cys-245–Cys-288. The short motif at 146–148 (RGD) is the Cell attachment site element. N-linked (GlcNAc...) asparagine glycosylation occurs at Asn-298. 2 cysteine pairs are disulfide-bonded: Cys-330/Cys-372 and Cys-416/Cys-482. The N-linked (GlcNAc...) asparagine glycan is linked to Asn-481. A helical membrane pass occupies residues 508–528 (IVAGAASAATSLLMVITGVVL). The Cytoplasmic segment spans residues 529–700 (CCWRHGSLSK…PSHQRLQTHV (172 aa)). The interval 542–576 (LVRIPGSSEGSSSRGPEEETGSSEDRGPIVHTDHS) is disordered. Phosphoserine is present on Ser-563. Positions 564 to 576 (SEDRGPIVHTDHS) are enriched in basic and acidic residues. Phosphotyrosine is present on residues Tyr-595, Tyr-596, and Tyr-653. The interval 671–700 (FGPPELSSGTPPFPYATLSPPSHQRLQTHV) is disordered. Residues 689–700 (SPPSHQRLQTHV) show a composition bias toward polar residues.

The protein belongs to the immunoglobulin superfamily. In terms of assembly, homodimer. Interacts with NPHS2/podocin (via the C-terminus). Interacts with NPHS1 (via the Ig-like domains). Interacts with FYN. N-glycosylated. Post-translationally, phosphorylated at Ser-548 or Ser-549; due to site ambiguity, the exact position of the serine phosphorylation could not be determined. Phosphorylation at residues Tyr-631 and/or Tyr-632. FYN mediates tyrosine phosphorylation in pancreatic beta-cells. In terms of processing, the extracellular domain is cleaved leading to the generation of a soluble fragment and a membrane-bound C-terminal fragment, which is further cleaved by gamma-secretase. Highly expressed in beta-cells of the pancreatic islets. Expression is seen in podocytes of kidney glomeruli, and in the cerebellum and hindbrain at 12.5 dpc, in the spinal cord at 10.5 dpc, and in retina and hypothalamus at 13.5 dpc.

The protein localises to the cell membrane. May regulate basal insulin secretion. In Mus musculus (Mouse), this protein is Kin of IRRE-like protein 2 (Kirrel2).